We begin with the raw amino-acid sequence, 73 residues long: Conotoxin MaI51 (73 aa).

A signal peptide spans 1–19; sequence MQKLTILLLVAAVLLSTQA. Residues 20-41 constitute a propeptide that is removed on maturation; it reads LNQEKRPKEMINVLSKGKTNAE. Pyrrolidone carboxylic acid is present on Q46. Intrachain disulfides connect C47/C61, C54/C65, and C60/C69. Position 72 is an isoleucine amide (I72).

The protein belongs to the conotoxin O2 superfamily. In terms of tissue distribution, expressed by the venom duct.

Its subcellular location is the secreted. This is Conotoxin MaI51 from Conus marmoreus (Marble cone).